A 179-amino-acid chain; its full sequence is MSEEIKEQNVQDAQNENLAPDSVNFDGLSDAAKVAELENKLNELTDKYYRANAEFENIKKRFEKEKTDIASYANEKFARDLLPVIDALEIAANFDPDDDEFAKNVKEGVLITINQFKKCFEKHGMSEIDTSGEFDPNVHNAVLRVDSEDHTSGQIVQVMQKGYIINGRVLRPAMVSVAN.

The tract at residues 1-23 is disordered; the sequence is MSEEIKEQNVQDAQNENLAPDSV.

Belongs to the GrpE family. As to quaternary structure, homodimer.

It localises to the cytoplasm. Functionally, participates actively in the response to hyperosmotic and heat shock by preventing the aggregation of stress-denatured proteins, in association with DnaK and GrpE. It is the nucleotide exchange factor for DnaK and may function as a thermosensor. Unfolded proteins bind initially to DnaJ; upon interaction with the DnaJ-bound protein, DnaK hydrolyzes its bound ATP, resulting in the formation of a stable complex. GrpE releases ADP from DnaK; ATP binding to DnaK triggers the release of the substrate protein, thus completing the reaction cycle. Several rounds of ATP-dependent interactions between DnaJ, DnaK and GrpE are required for fully efficient folding. The polypeptide is Protein GrpE (Campylobacter curvus (strain 525.92)).